The following is an 821-amino-acid chain: Protein EFR3 homolog A (821 aa).

Ser360, Ser363, Ser422, and Ser694 each carry phosphoserine.

It belongs to the EFR3 family. Component of a phosphatidylinositol 4-kinase (PI4K) complex, composed of PI4KA, EFR3 (EFR3A or EFR3B), TTC7 (TTC7A or TTC7B) and HYCC (HYCC1 or HYCC2). Palmitoylated at its N-terminus, anchoring the protein to the plasma membrane.

The protein resides in the cell membrane. The protein localises to the cytoplasm. Its subcellular location is the cytosol. In terms of biological role, component of a complex required to localize phosphatidylinositol 4-kinase (PI4K) to the plasma membrane. The complex acts as a regulator of phosphatidylinositol 4-phosphate (PtdIns(4)P) synthesis. In the complex, EFR3A probably acts as the membrane-anchoring component. Also involved in responsiveness to G-protein-coupled receptors; it is however unclear whether this role is direct or indirect. The sequence is that of Protein EFR3 homolog A from Homo sapiens (Human).